A 148-amino-acid chain; its full sequence is Large ribosomal subunit protein uL15 (148 aa).

The segment at 1–46 (MITIEDLKPTPGSNKKYKRLGRGQGSGKGKTAGKGHKGQKSRGTGK) is disordered. Residues 31-45 (TAGKGHKGQKSRGTG) are compositionally biased toward basic residues.

This sequence belongs to the universal ribosomal protein uL15 family. As to quaternary structure, part of the 50S ribosomal subunit.

In terms of biological role, binds to the 23S rRNA. In Fervidobacterium nodosum (strain ATCC 35602 / DSM 5306 / Rt17-B1), this protein is Large ribosomal subunit protein uL15.